The following is a 218-amino-acid chain: Ribonuclease T (218 aa).

Residues 22–196 (VVVDVETAGF…YDAMKTAELF (175 aa)) enclose the Exonuclease domain. 4 residues coordinate Mg(2+): Asp-25, Glu-27, His-183, and Asp-188. Catalysis depends on His-183, which acts as the Proton donor/acceptor.

This sequence belongs to the RNase T family. Homodimer. Mg(2+) serves as cofactor.

In terms of biological role, trims short 3' overhangs of a variety of RNA species, leaving a one or two nucleotide 3' overhang. Responsible for the end-turnover of tRNA: specifically removes the terminal AMP residue from uncharged tRNA (tRNA-C-C-A). Also appears to be involved in tRNA biosynthesis. The protein is Ribonuclease T of Hahella chejuensis (strain KCTC 2396).